Reading from the N-terminus, the 212-residue chain is MSSLTGKLIVIEGLEGAGKSTAVNLVVELLSQKKISTITTREPGGTRIGEILRSIIKNPEYNNVLDDRSELLLLYAARIQLIEQVIKPALNVGQWVIADRFELSTLAYQGGGRKMNMRVINELSNFCLKGFKPDLTLYLDINPELGMIRAKSRGKFDRIEQESIEFFHRIHDTYHVLVKQNPEIMMIDANRSLDEVQSSIQSVIEEFIEHNL.

13–20 contributes to the ATP binding site; that stretch reads GLEGAGKS.

The protein belongs to the thymidylate kinase family.

It catalyses the reaction dTMP + ATP = dTDP + ADP. Phosphorylation of dTMP to form dTDP in both de novo and salvage pathways of dTTP synthesis. The polypeptide is Thymidylate kinase (Legionella pneumophila (strain Paris)).